A 436-amino-acid chain; its full sequence is 3-ketoacyl-CoA thiolase (436 aa).

The active-site Acyl-thioester intermediate is Cys99. Catalysis depends on proton acceptor residues His392 and Cys422.

The protein belongs to the thiolase-like superfamily. Thiolase family. As to quaternary structure, heterotetramer of two alpha chains (FadJ) and two beta chains (FadI).

It is found in the cytoplasm. The enzyme catalyses an acyl-CoA + acetyl-CoA = a 3-oxoacyl-CoA + CoA. It participates in lipid metabolism; fatty acid beta-oxidation. Catalyzes the final step of fatty acid oxidation in which acetyl-CoA is released and the CoA ester of a fatty acid two carbons shorter is formed. The sequence is that of 3-ketoacyl-CoA thiolase from Shigella boydii serotype 4 (strain Sb227).